A 466-amino-acid polypeptide reads, in one-letter code: Zinc finger protein ZIC 3 (466 aa).

Residues 65-80 are compositionally biased toward polar residues; that stretch reads DLSSGQSSAFTPQGSG. The disordered stretch occupies residues 65-103; that stretch reads DLSSGQSSAFTPQGSGYANALGHHHHHHHHHHASQVPTY. Basic residues predominate over residues 86–97; sequence GHHHHHHHHHHA. Residue K247 forms a Glycyl lysine isopeptide (Lys-Gly) (interchain with G-Cter in SUMO2) linkage. Residues 250-285 form a C2H2-type 1; atypical zinc finger; that stretch reads LSCKWIEEAQLSRPKKSCDRTFSTMHELVTHVTMEH. The segment at 294 to 321 adopts a C2H2-type 2; atypical zinc-finger fold; that stretch reads HVCYWEECPREGKSFKAKYKLVNHIRVH. 2 consecutive short sequence motifs (nuclear localization signal) follow at residues 296 to 321 and 329 to 351; these read CYWE…IRVH and CPFP…KRTH. 3 C2H2-type zinc fingers span residues 327–351, 357–381, and 387–409; these read FPCP…KRTH, FKCE…MHVH, and YICK…MKVH. The disordered stretch occupies residues 403–466; sequence RKHMKVHESQ…LPPNFNEWYV (64 aa). Over residues 411 to 427 the composition is skewed to low complexity; it reads SQGSDSSPAASSGYESS. Residues 434 to 454 are compositionally biased toward polar residues; sequence SANSKDTTKTPSAVQTSTSHN.

This sequence belongs to the GLI C2H2-type zinc-finger protein family. As to quaternary structure, interacts with KPNA1 and KPNA6. Interacts (via C2H2-type domains 3, 4 and 5) with GLI3; the interaction enhances its transcriptional activity. Interacts (via the C2H2-type domains 3, 4 and 5) with MDFIC (via the C2H2-type domains 3, 4 and 5); the interaction reduces its transcriptional activity. CNS. A high level expression is seen in the cerebellum.

The protein resides in the nucleus. It is found in the cytoplasm. In terms of biological role, acts as a transcriptional activator. Required in the earliest stages in both axial midline development and left-right (LR) asymmetry specification. Binds to the minimal GLI-consensus sequence 5'-GGGTGGTC-3'. The sequence is that of Zinc finger protein ZIC 3 (Zic3) from Mus musculus (Mouse).